A 266-amino-acid chain; its full sequence is Glucosamine-6-phosphate deaminase (266 aa).

Asp72 serves as the catalytic Proton acceptor; for enolization step. The For ring-opening step role is filled by Asp141. Catalysis depends on His143, which acts as the Proton acceptor; for ring-opening step. Glu148 serves as the catalytic For ring-opening step.

It belongs to the glucosamine/galactosamine-6-phosphate isomerase family. NagB subfamily. As to quaternary structure, homohexamer.

The enzyme catalyses alpha-D-glucosamine 6-phosphate + H2O = beta-D-fructose 6-phosphate + NH4(+). Its pathway is amino-sugar metabolism; N-acetylneuraminate degradation; D-fructose 6-phosphate from N-acetylneuraminate: step 5/5. Its activity is regulated as follows. Allosterically activated by N-acetylglucosamine 6-phosphate (GlcNAc6P). In terms of biological role, catalyzes the reversible isomerization-deamination of glucosamine 6-phosphate (GlcN6P) to form fructose 6-phosphate (Fru6P) and ammonium ion. The protein is Glucosamine-6-phosphate deaminase of Vibrio campbellii (strain ATCC BAA-1116).